A 403-amino-acid chain; its full sequence is Eukaryotic translation initiation factor 3 subunit H (403 aa).

The 150-residue stretch at 57 to 206 (VRLDGLALTK…VKAYRLSPSF (150 aa)) folds into the MPN domain. The disordered stretch occupies residues 99–122 (ALPNPGRSNSERDEEEDRSSRNAT).

It belongs to the eIF-3 subunit H family. In terms of assembly, component of the eukaryotic translation initiation factor 3 (eIF-3) complex.

It localises to the cytoplasm. In terms of biological role, component of the eukaryotic translation initiation factor 3 (eIF-3) complex, which is involved in protein synthesis of a specialized repertoire of mRNAs and, together with other initiation factors, stimulates binding of mRNA and methionyl-tRNAi to the 40S ribosome. The eIF-3 complex specifically targets and initiates translation of a subset of mRNAs involved in cell proliferation. In Mycosarcoma maydis (Corn smut fungus), this protein is Eukaryotic translation initiation factor 3 subunit H.